Reading from the N-terminus, the 483-residue chain is tRNA sulfurtransferase (483 aa).

Residues 62–166 (PEICDALTRI…QDKLILVKAR (105 aa)) form the THUMP domain. ATP contacts are provided by residues 184 to 185 (LI), lysine 266, glycine 288, and glutamine 297. Cysteine 345 and cysteine 457 form a disulfide bridge. The 79-residue stretch at 405-483 (LADTDVLLDI…GYTNVKVYRP (79 aa)) folds into the Rhodanese domain. Residue cysteine 457 is the Cysteine persulfide intermediate of the active site.

This sequence belongs to the ThiI family.

It localises to the cytoplasm. It carries out the reaction [ThiI sulfur-carrier protein]-S-sulfanyl-L-cysteine + a uridine in tRNA + 2 reduced [2Fe-2S]-[ferredoxin] + ATP + H(+) = [ThiI sulfur-carrier protein]-L-cysteine + a 4-thiouridine in tRNA + 2 oxidized [2Fe-2S]-[ferredoxin] + AMP + diphosphate. The enzyme catalyses [ThiS sulfur-carrier protein]-C-terminal Gly-Gly-AMP + S-sulfanyl-L-cysteinyl-[cysteine desulfurase] + AH2 = [ThiS sulfur-carrier protein]-C-terminal-Gly-aminoethanethioate + L-cysteinyl-[cysteine desulfurase] + A + AMP + 2 H(+). It participates in cofactor biosynthesis; thiamine diphosphate biosynthesis. Catalyzes the ATP-dependent transfer of a sulfur to tRNA to produce 4-thiouridine in position 8 of tRNAs, which functions as a near-UV photosensor. Also catalyzes the transfer of sulfur to the sulfur carrier protein ThiS, forming ThiS-thiocarboxylate. This is a step in the synthesis of thiazole, in the thiamine biosynthesis pathway. The sulfur is donated as persulfide by IscS. The chain is tRNA sulfurtransferase from Yersinia pseudotuberculosis serotype O:1b (strain IP 31758).